Consider the following 533-residue polypeptide: MTSEQFPWLTGIILLPILAALPIPLIPDKDGRTVRWYSLFVGLADFALMVYAFWQHFDRSEAGLQMVEKISWVPQIGLNWSLAVDGLSMPLVLLTGLVTTLAILASWNINVKPKLFHFLLLLLYGAQIAVFTAQDMMLFFLVWELELVPVYLLISIWGGPKRQYAATKFILYTALASLFILVAGLALAFSGDSFSFDLTELGLKDYSLWLELLAYAGFLIAFGVKLSIFPLHTWLPDAHGEANAPGSMLLAGILLKMGGYALIRFNVQLLPEAHIRFAPVLAVLGIVNIIYGALNAFAQDNLKRKIAYSSISHMGFVLLGIAAYNSLGLNGALLQMLSHGLIAAALFFLAGVAYERTHTLQIPQISGLAKQMPITFALFTVTAMASLALPGMSGFVSELTVFLGFTDSVYSSGFRTVTILLAAVGLVLTPMYLLSMLRRIFYGTYNIQLGQVLADAKPRELFVAFCLLVPTLAIGFYPKLTTQVYDVTTTALAAQVQSNLPVVALAQQGSLYSQMPAAEEATAVSMTAPPVID.

Transmembrane regions (helical) follow at residues 6-26 (FPWLTGIILLPILAALPIPLI), 37-57 (YSLFVGLADFALMVYAFWQHF), 87-107 (LSMPLVLLTGLVTTLAILASW), 113-133 (PKLFHFLLLLLYGAQIAVFTA), 137-157 (MLFFLVWELELVPVYLLISIW), 169-189 (FILYTALASLFILVAGLALAF), 209-229 (WLELLAYAGFLIAFGVKLSIF), 243-263 (NAPGSMLLAGILLKMGGYALI), 277-297 (FAPVLAVLGIVNIIYGALNAF), 311-331 (ISHMGFVLLGIAAYNSLGLNG), 332-352 (ALLQMLSHGLIAAALFFLAGV), 376-396 (FALFTVTAMASLALPGMSGFV), 417-437 (VTILLAAVGLVLTPMYLLSML), and 461-481 (LFVAFCLLVPTLAIGFYPKLT).

Belongs to the complex I subunit 4 family.

It is found in the cellular thylakoid membrane. The catalysed reaction is a plastoquinone + NADH + (n+1) H(+)(in) = a plastoquinol + NAD(+) + n H(+)(out). It catalyses the reaction a plastoquinone + NADPH + (n+1) H(+)(in) = a plastoquinol + NADP(+) + n H(+)(out). Functionally, NDH-1 shuttles electrons from NAD(P)H, via FMN and iron-sulfur (Fe-S) centers, to quinones in the respiratory chain. The immediate electron acceptor for the enzyme in this species is believed to be plastoquinone. Couples the redox reaction to proton translocation (for every two electrons transferred, four hydrogen ions are translocated across the cytoplasmic membrane), and thus conserves the redox energy in a proton gradient. This Synechococcus elongatus (strain ATCC 33912 / PCC 7942 / FACHB-805) (Anacystis nidulans R2) protein is NAD(P)H-quinone oxidoreductase chain 4 1.